Reading from the N-terminus, the 284-residue chain is uncharacterized protein (284 aa).

To E.coli YnjA.

This is an uncharacterized protein from Mycobacterium tuberculosis (strain CDC 1551 / Oshkosh).